A 258-amino-acid polypeptide reads, in one-letter code: Spindlin-2A (258 aa).

Residues 1–23 are compositionally biased toward low complexity; the sequence is MKTPNAQEAEGQQTRAAAGRATG. The disordered stretch occupies residues 1–49; it reads MKTPNAQEAEGQQTRAAAGRATGSANMTKKKVSQKKQRGRPSSQPRRNI. The span at 28–39 shows a compositional bias: basic residues; sequence TKKKVSQKKQRG. Tudor-like domain regions lie at residues 50–99, 129–178, and 210–255; these read VGCR…LELH, IGKA…YQLL, and IGKH…YDLV. Histone H3K4me3 and H3R8me2a binding stretches follow at residues glutamate 138 and 246–248; that span reads DFH.

Belongs to the SPIN/STSY family. In terms of assembly, interacts with C11orf84/SPINDOC.

It localises to the nucleus. Functionally, may be involved in the regulation of cell cycle progression. Exhibits H3K4me3-binding activity. The chain is Spindlin-2A (SPIN2A) from Homo sapiens (Human).